The chain runs to 152 residues: MADQDNPVFQIQRVYLKDLSLEQPNSPAILLEQEQPNLDIQLGVEATPVGEGFFEVAVTATVQTKIKDKTMFLVEAKQAAIFEIRNVPEDQMGQIMGVVCPQIVYPYLRGNVADVINRAGFPPVHLGEINFQGMYEQQQAQAAGAAAPVTTQ.

This sequence belongs to the SecB family. In terms of assembly, homotetramer, a dimer of dimers. One homotetramer interacts with 1 SecA dimer.

Its subcellular location is the cytoplasm. One of the proteins required for the normal export of preproteins out of the cell cytoplasm. It is a molecular chaperone that binds to a subset of precursor proteins, maintaining them in a translocation-competent state. It also specifically binds to its receptor SecA. In Verminephrobacter eiseniae (strain EF01-2), this protein is Protein-export protein SecB.